The following is a 151-amino-acid chain: 3-hydroxyacyl-[acyl-carrier-protein] dehydratase FabZ (151 aa).

Histidine 54 is a catalytic residue.

Belongs to the thioester dehydratase family. FabZ subfamily.

It localises to the cytoplasm. The catalysed reaction is a (3R)-hydroxyacyl-[ACP] = a (2E)-enoyl-[ACP] + H2O. Involved in unsaturated fatty acids biosynthesis. Catalyzes the dehydration of short chain beta-hydroxyacyl-ACPs and long chain saturated and unsaturated beta-hydroxyacyl-ACPs. This is 3-hydroxyacyl-[acyl-carrier-protein] dehydratase FabZ from Erwinia tasmaniensis (strain DSM 17950 / CFBP 7177 / CIP 109463 / NCPPB 4357 / Et1/99).